A 314-amino-acid chain; its full sequence is MDKFSLSHMSVWQGRQDPEDGELALRWYDKVQAWPLSGTAEPGVALVGFACDEGVRRNKGRVGAAGAPLAIRKLLANSAWHLTRPVYDSGDLTCDDGDLDAAHARLAERVASLLDEGHFPLVLGGGHEVAFGSWNGLNRHLVGQGRVGIINFDAHFDLRRKVEQASSGTPFFQIAEQCTAQGTPFHYACLGVAETANTQALFARADALGVWYVKDEAMSERSLPALLSGLDSFIAQSDHIYLTIDLDVLPGAVMPGVSAPAARGVELAIIEPLIAHIQASGKLRLADLAEYNPNLDQDNRSARVAARLVHQLTK.

6 residues coordinate Mn(2+): histidine 127, aspartate 153, histidine 155, aspartate 157, aspartate 245, and aspartate 247.

This sequence belongs to the arginase family. It depends on Mn(2+) as a cofactor.

The catalysed reaction is N-formimidoyl-L-glutamate + H2O = formamide + L-glutamate. It functions in the pathway amino-acid degradation; L-histidine degradation into L-glutamate; L-glutamate from N-formimidoyl-L-glutamate (hydrolase route): step 1/1. Its function is as follows. Catalyzes the conversion of N-formimidoyl-L-glutamate to L-glutamate and formamide. This chain is Formimidoylglutamase, found in Aeromonas salmonicida (strain A449).